The chain runs to 575 residues: Phosphoenolpyruvate-protein phosphotransferase (575 aa).

The active-site Tele-phosphohistidine intermediate is the His-191. Residues Arg-298 and Arg-334 each contribute to the phosphoenolpyruvate site. Mg(2+)-binding residues include Glu-435 and Asp-459. Residues 458–459 and Arg-469 each bind phosphoenolpyruvate; that span reads ND. Cys-506 acts as the Proton donor in catalysis.

It belongs to the PEP-utilizing enzyme family. In terms of assembly, homodimer. Mg(2+) is required as a cofactor.

It is found in the cytoplasm. It carries out the reaction L-histidyl-[protein] + phosphoenolpyruvate = N(pros)-phospho-L-histidyl-[protein] + pyruvate. Its function is as follows. General (non sugar-specific) component of the phosphoenolpyruvate-dependent sugar phosphotransferase system (sugar PTS). This major carbohydrate active-transport system catalyzes the phosphorylation of incoming sugar substrates concomitantly with their translocation across the cell membrane. Enzyme I transfers the phosphoryl group from phosphoenolpyruvate (PEP) to the phosphoryl carrier protein (HPr). This chain is Phosphoenolpyruvate-protein phosphotransferase (ptsI), found in Enterococcus faecalis (strain ATCC 700802 / V583).